The chain runs to 182 residues: Bifunctional protein PyrR (182 aa).

Positions 98–110 match the PRPP-binding motif; that stretch reads VVLVDDVLFTGRS.

The protein belongs to the purine/pyrimidine phosphoribosyltransferase family. PyrR subfamily.

The enzyme catalyses UMP + diphosphate = 5-phospho-alpha-D-ribose 1-diphosphate + uracil. Functionally, regulates the transcription of the pyrimidine nucleotide (pyr) operon in response to exogenous pyrimidines. Its function is as follows. Also displays a weak uracil phosphoribosyltransferase activity which is not physiologically significant. This chain is Bifunctional protein PyrR, found in Dehalococcoides mccartyi (strain ATCC BAA-2100 / JCM 16839 / KCTC 5957 / BAV1).